Reading from the N-terminus, the 248-residue chain is Granzyme-like protein 2 (248 aa).

The first 18 residues, 1–18 (MFLFLIFLVAVLPVNTEG), serve as a signal peptide directing secretion. The propeptide at 19 to 20 (GE) is activation peptide. The region spanning 21–243 (IVWGTESKPH…FIPWIQKTMK (223 aa)) is the Peptidase S1 domain. Cysteine 50 and cysteine 66 are oxidised to a cystine. Residues histidine 65 and aspartate 108 each act as charge relay system in the active site. 2 cysteine pairs are disulfide-bonded: cysteine 142/cysteine 207 and cysteine 172/cysteine 186. Asparagine 152 and asparagine 180 each carry an N-linked (GlcNAc...) asparagine glycan. Serine 201 acts as the Charge relay system in catalysis.

It belongs to the peptidase S1 family. Granzyme subfamily. In terms of tissue distribution, duodenum, lung and spleen.

Its function is as follows. This enzyme is necessary for target cell lysis in cell-mediated immune responses. This is Granzyme-like protein 2 from Rattus norvegicus (Rat).